Consider the following 267-residue polypeptide: Thyroxine 5-deiodinase (267 aa).

Topologically, residues 1–15 (MHDSGGVQMARALKH) are cytoplasmic. The helical; Signal-anchor for type II membrane protein transmembrane segment at 16–36 (AALCLMLLPRFLLAAVMLWLL) threads the bilayer. Over 37–267 (DFLCIRKKVL…VNSQTAVLHV (231 aa)) the chain is Extracellular. The active site involves Sec131. Residue Sec131 is a non-standard amino acid, selenocysteine.

Belongs to the iodothyronine deiodinase family. In terms of assembly, monomer. Homodimer. May undergo minor heretodimerization with DIO1 and DIO2.

It is found in the cell membrane. The protein localises to the endosome membrane. The catalysed reaction is 3,3',5'-triiodo-L-thyronine + iodide + A + H(+) = L-thyroxine + AH2. The enzyme catalyses 3,3'-diiodo-L-thyronine + iodide + A + H(+) = 3,3',5-triiodo-L-thyronine + AH2. It catalyses the reaction 3-iodo-L-thyronine + iodide + A + H(+) = 3,5-diiodo-L-thyronine + AH2. It carries out the reaction L-thyronine + iodide + A + H(+) = 3-iodo-L-thyronine + AH2. The catalysed reaction is 3',5'-diiodo-L-thyronine + iodide + A + H(+) = 3,3',5'-triiodo-L-thyronine + AH2. The enzyme catalyses 3'-iodo-L-thyronine + iodide + A + H(+) = 3,3'-diiodo-L-thyronine + AH2. It catalyses the reaction 3,3',5'-triiodothyronamine + iodide + A + H(+) = 3,3',5,5'-tetraiodothyronamine + AH2. It carries out the reaction 3',5'-diiodothyronamine + iodide + A + H(+) = 3,3',5'-triiodothyronamine + AH2. The catalysed reaction is 3,3'-diiodothyronamine + iodide + A + H(+) = 3,3',5-triiodothyronamine + AH2. The enzyme catalyses 3-iodothyronamine + iodide + A + H(+) = 3,5-diiodothyronamine + AH2. It catalyses the reaction 3'-iodothyronamine + iodide + A + H(+) = 3,3'-diiodothyronamine + AH2. It carries out the reaction thyronamine + iodide + A + H(+) = 3-iodothyronamine + AH2. Its function is as follows. Plays a crucial role in the metabolism of thyroid hormones (TH) and has specific roles in TH activation and inactivation by deiodination. Catalyzes the deiodination of L-thyroxine (T4) to 3,3',5'-triiodothyronine (rT3), 3,5,3'-triiodothyronine (T3) to 3,3'-diiodothyronine (3,3'-T2), 3,5-diiodothyronine (3,5-T2) to 3-monoiodothyronine (3-T1), rT3 to 3',5'-diiodothyronine (3',5'-T2) and 3,3'-T2 to 3'-monoiodothyronine (3'-T1) via inner-ring deiodination (IRD). Catalyzes the deiodination of 3-T1 to L-thyronine (T0) via outer-ring deiodination (ORD). Catalyzes the tyrosyl ring deiodinations of 3,3',5,5'-tetraiodothyronamine, 3,3',5'-triiodothyronamine, 3,5,3'-triiodothyronamine, 3,5-diiodothyronamine, 3,3'-diiodothyronamine and 3-iodothyronamine. This is Thyroxine 5-deiodinase (dio3) from Sparus aurata (Gilthead sea bream).